A 504-amino-acid polypeptide reads, in one-letter code: ATP synthase subunit alpha, chloroplastic (504 aa).

170 to 177 (GDRQTGKT) provides a ligand contact to ATP.

Belongs to the ATPase alpha/beta chains family. F-type ATPases have 2 components, CF(1) - the catalytic core - and CF(0) - the membrane proton channel. CF(1) has five subunits: alpha(3), beta(3), gamma(1), delta(1), epsilon(1). CF(0) has four main subunits: a, b, b' and c.

It localises to the plastid. Its subcellular location is the chloroplast thylakoid membrane. The catalysed reaction is ATP + H2O + 4 H(+)(in) = ADP + phosphate + 5 H(+)(out). Functionally, produces ATP from ADP in the presence of a proton gradient across the membrane. The alpha chain is a regulatory subunit. The sequence is that of ATP synthase subunit alpha, chloroplastic from Ostreococcus tauri.